Here is a 540-residue protein sequence, read N- to C-terminus: Phosphatidylinositol 4-phosphate 5-kinase type-1 beta (540 aa).

The interval 1–21 is disordered; it reads MSSAAENGEAAPGKQNEEKTY. One can recognise a PIPK domain in the interval 25-395; that stretch reads ASSAIKGAIQ…RFLKFMNSRV (371 aa). Ser-445, Ser-447, and Ser-448 each carry phosphoserine.

In terms of assembly, interacts with RAC1, AJUBA, PLD1, PLD2 and ARF1. Detected in heart, pancreas, brain, kidney, skeletal muscle and lung.

Its subcellular location is the cytoplasm. The protein resides in the cytosol. The protein localises to the cell membrane. It localises to the endomembrane system. It carries out the reaction a 1,2-diacyl-sn-glycero-3-phospho-(1D-myo-inositol 4-phosphate) + ATP = a 1,2-diacyl-sn-glycero-3-phospho-(1D-myo-inositol-4,5-bisphosphate) + ADP + H(+). The catalysed reaction is 1-octadecanoyl-2-(5Z,8Z,11Z,14Z)-eicosatetraenoyl-sn-glycero-3-phospho-1D-myo-inositol 4-phosphate + ATP = 1-octadecanoyl-2-(5Z,8Z,11Z,14Z)-eicosatetraenoyl-sn-glycero-3-phospho-1D-myo-inositol 4,5-bisphosphate + ADP + H(+). The enzyme catalyses 1-octadecanoyl-2-(9Z)-octadecenoyl-sn-glycero-3-phospho-1D-myo-inositol 4-phosphate + ATP = 1-octadecanoyl-2-(9Z)-octadecenoyl-sn-glycero-3-phospho-1D-myo-inositol 4,5-bisphosphate + ADP + H(+). It catalyses the reaction 1-octadecanoyl-2-(9Z)-octadecenoyl-sn-glycero-3-phospho-1D-myo-inositol + ATP = 1-octadecanoyl-2-(9Z)-octadecenoyl-sn-glycero-3-phospho-1D-myo-inositol 5-phosphate + ADP + H(+). It carries out the reaction 1-octadecanoyl-2-(9Z,12Z)-octadecadienoyl-sn-glycero-3-phospho-1D-myo-inositol + ATP = 1-octadecanoyl-2-(9Z,12Z)-octadecadienoyl-sn-glycero-3-phospho-1D-myo-inositol 5-phosphate + ADP + H(+). The catalysed reaction is 1-octadecanoyl-2-(5Z,8Z,11Z,14Z-eicosatetraenoyl)-sn-glycero-3-phospho-(1D-myo-inositol) + ATP = 1-octadecanoyl-2-(5Z,8Z,11Z,14Z)-eicosatetraenoyl-sn-glycero-3-phospho-1D-myo-inositol 5-phosphate + ADP + H(+). The enzyme catalyses 1,2-di-(9Z,12Z)-octadecadienoyl-sn-glycero-3-phospho-1D-myo-inositol + ATP = 1,2-di(9Z,12Z)-octadecadienoyl-sn-glycero-3-phospho-1D-myo-inositol 5-phosphate + ADP + H(+). Functionally, catalyzes the phosphorylation of phosphatidylinositol 4-phosphate (PtdIns(4)P/PI4P) to form phosphatidylinositol 4,5-bisphosphate (PtdIns(4,5)P2/PIP2), a lipid second messenger that regulates several cellular processes such as signal transduction, vesicle trafficking, actin cytoskeleton dynamics, cell adhesion, and cell motility. PtdIns(4,5)P2 can directly act as a second messenger or can be utilized as a precursor to generate other second messengers: inositol 1,4,5-trisphosphate (IP3), diacylglycerol (DAG) or phosphatidylinositol-3,4,5-trisphosphate (PtdIns(3,4,5)P3/PIP3). Mediates RAC1-dependent reorganization of actin filaments. Contributes to the activation of phospholipase PLD2. Together with PIP5K1A, is required, after stimulation by G-protein coupled receptors, for the synthesis of IP3 that will induce stable platelet adhesion. This chain is Phosphatidylinositol 4-phosphate 5-kinase type-1 beta, found in Homo sapiens (Human).